The sequence spans 1813 residues: Latent-transforming growth factor beta-binding protein 2 (1813 aa).

The signal sequence occupies residues Met1 to Ala35. The heparin-binding stretch occupies residues Asn94–Val115. The segment at Ala103 to Ala152 is disordered. Over residues Arg108–Ile132 the composition is skewed to polar residues. Asn175 carries N-linked (GlcNAc...) asparagine glycosylation. One can recognise an EGF-like 1 domain in the interval Ile181–Glu213. Cystine bridges form between Cys185–Cys195, Cys189–Cys201, and Cys203–Cys212. Positions Glu220–Gly305 are disordered. The interval Ala226–Ser243 is heparin-binding. The span at Leu257–Ser266 shows a compositional bias: pro residues. A compositionally biased stretch (polar residues) spans Ala293 to Leu302. N-linked (GlcNAc...) asparagine glycosylation occurs at Asn328. Heparin is bound at residue Leu329–Val339. The EGF-like 2 domain occupies Arg381–His413. 3 disulfides stabilise this stretch: Cys385–Cys395, Cys389–Cys401, and Cys403–Cys412. Residue Asn406 is glycosylated (N-linked (GlcNAc...) asparagine). Phosphoserine is present on Ser491. The disordered stretch occupies residues Val492–Pro524. A TB 1 domain is found at Gly536–Ile588. Disulfide bonds link Cys538-Cys560, Cys547-Cys573, and Cys561-Cys576. Asn603 carries an N-linked (GlcNAc...) asparagine glycan. One can recognise an EGF-like 3; calcium-binding domain in the interval Asp609 to Val649. Cystine bridges form between Cys613–Cys624, Cys619–Cys633, Cys635–Cys648, Cys661–Cys683, Cys670–Cys696, Cys684–Cys699, and Cys685–Cys711. The 53-residue stretch at Gly659–Cys711 folds into the TB 2 domain. 2 disordered regions span residues Lys730–Arg761 and Ser787–Glu819. Residues Asp835 to Thr877 form the EGF-like 4 domain. Cystine bridges form between Cys839/Cys852, Cys847/Cys861, Cys863/Cys876, Cys882/Cys893, Cys887/Cys902, Cys904/Cys919, Cys925/Cys936, Cys931/Cys945, Cys947/Cys959, Cys965/Cys976, Cys971/Cys985, Cys988/Cys999, Cys1005/Cys1016, Cys1011/Cys1025, Cys1027/Cys1040, Cys1046/Cys1057, Cys1052/Cys1066, Cys1069/Cys1082, Cys1088/Cys1099, Cys1094/Cys1108, Cys1111/Cys1124, Cys1130/Cys1142, Cys1137/Cys1151, Cys1153/Cys1165, Cys1171/Cys1183, Cys1177/Cys1192, Cys1194/Cys1207, Cys1213/Cys1224, Cys1219/Cys1233, Cys1235/Cys1249, Cys1255/Cys1268, Cys1263/Cys1277, Cys1281/Cys1293, Cys1299/Cys1311, Cys1305/Cys1320, Cys1322/Cys1335, Cys1341/Cys1353, Cys1348/Cys1362, Cys1364/Cys1378, Cys1405/Cys1428, Cys1415/Cys1440, Cys1429/Cys1443, Cys1430/Cys1455, Cys1481/Cys1494, Cys1489/Cys1503, Cys1505/Cys1518, Cys1524/Cys1534, Cys1529/Cys1543, and Cys1545/Cys1558. The EGF-like 5; calcium-binding domain occupies Asp878–Gln920. An EGF-like 6; calcium-binding domain is found at Asp921–Gln960. The EGF-like 7; calcium-binding domain occupies Asp961–Val1000. Residues Asp1001–Arg1041 enclose the EGF-like 8; calcium-binding domain. Positions Asp1042–Glu1083 constitute an EGF-like 9; calcium-binding domain. In terms of domain architecture, EGF-like 10; calcium-binding spans Asp1084–Glu1125. Positions Asp1126–Glu1166 constitute an EGF-like 11; calcium-binding domain. Residue Asn1161 is glycosylated (N-linked (GlcNAc...) asparagine). One can recognise an EGF-like 12; calcium-binding domain in the interval Asp1167–Gln1208. In terms of domain architecture, EGF-like 13; calcium-binding spans Asp1209 to Leu1250. The region spanning Asp1251–Ile1294 is the EGF-like 14; calcium-binding domain. In terms of domain architecture, EGF-like 15; calcium-binding spans Asp1295–Val1336. Asn1301 carries N-linked (GlcNAc...) asparagine glycosylation. Residues Asp1337 to Arg1379 enclose the EGF-like 16; calcium-binding domain. Residues Met1403–Cys1455 form the TB 3 domain. Asn1422 is a glycosylation site (N-linked (GlcNAc...) asparagine). Residues Asp1477 to Gln1519 enclose the EGF-like 17; calcium-binding domain. One can recognise an EGF-like 18; calcium-binding domain in the interval Asp1520–Val1559. Asn1560 is a glycosylation site (N-linked (GlcNAc...) asparagine). The region spanning Asp1576–Cys1628 is the TB 4 domain. Cystine bridges form between Cys1578–Cys1601, Cys1587–Cys1613, Cys1602–Cys1616, and Cys1603–Cys1628. The tract at residues Ala1631–Glu1813 is C-terminal domain. The interval Tyr1671–Pro1717 is disordered. The EGF-like 19; calcium-binding domain occupies Gln1725–Val1765. Intrachain disulfides connect Cys1729–Cys1740, Cys1735–Cys1749, Cys1751–Cys1764, Cys1770–Cys1785, Cys1780–Cys1794, and Cys1796–Cys1809. In terms of domain architecture, EGF-like 20; calcium-binding spans Asp1766–Ala1810.

It belongs to the LTBP family. Forms part of the large latent transforming growth factor beta precursor complex; removal is essential for activation of complex. Interacts with SDC4. Interacts (via C-terminal domain) with FBN1 (via N-terminal domain) in a Ca(+2)-dependent manner. N-Glycosylated. Post-translationally, contains hydroxylated asparagine residues. As to expression, expressed in the anterior chamber of the eye.

The protein localises to the secreted. It is found in the extracellular space. The protein resides in the extracellular matrix. Its function is as follows. May play an integral structural role in elastic-fiber architectural organization and/or assembly. This Mus musculus (Mouse) protein is Latent-transforming growth factor beta-binding protein 2 (Ltbp2).